A 206-amino-acid chain; its full sequence is Geminin (206 aa).

The segment covering 1–18 has biased composition (polar residues); it reads MNLSMKQKQEGAQENVKN. A disordered region spans residues 1 to 42; that stretch reads MNLSMKQKQEGAQENVKNSPVPRRTLKMIQPSADGSLVGREN. Residue Lys27 is modified to N6-acetyllysine. 3 positions are modified to phosphoserine: Ser36, Ser63, and Ser64. The necessary and sufficient for interaction with IDAS and CDT1 stretch occupies residues 79–158; that stretch reads TQEAFDLISK…AEVIERLSNE (80 aa). The stretch at 91 to 141 forms a coiled coil; it reads PSSQYWKEVAEQRRKALYEALKENEKLHKEIEQKDSEIARLRKENKDLAEV. The tract at residues 157–206 is disordered; that stretch reads NEPLDNFESPDSQEFDSEEEAVEYSELEDSGAGTCAEETVSSSTDARPCT. Acidic residues predominate over residues 167 to 185; the sequence is DSQEFDSEEEAVEYSELED. Residues 167 to 187 are homeodomain binding; sequence DSQEFDSEEEAVEYSELEDSG. Ser181 is modified (phosphoserine; by CK2). The span at 195-206 shows a compositional bias: polar residues; that stretch reads TVSSSTDARPCT.

It belongs to the geminin family. In terms of assembly, homotetramer. Interacts with CDT1; this inhibits binding of the MCM complex to origins of replication. The complex with CDT1 exists in two forms, a 'permissive' heterotrimer and an 'inhibitory' heterohexamer. Interacts (via coiled-coil domain) with IDAS (via coiled-coil domain); this targets GMNN to the nucleus. The heterodimer formed by GMNN and MCIDAS has much lower affinity for CDT1 than the GMNN homodimer. Interacts with a subset of Hox proteins, affinity increasing from anterior to posterior types, the strongest interaction being with HOXB1, HOXC9 and HOXD10. Interacts with LRWD1 from G1/S to mitosis. In terms of processing, phosphorylated during mitosis. Phosphorylation at Ser-181 by CK2 results in enhanced binding to Hox proteins and more potent inhibitory effect on Hox transcriptional activity.

The protein resides in the cytoplasm. The protein localises to the nucleus. In terms of biological role, inhibits DNA replication by preventing the incorporation of MCM complex into pre-replication complex (pre-RC). It is degraded during the mitotic phase of the cell cycle. Its destruction at the metaphase-anaphase transition permits replication in the succeeding cell cycle. Inhibits histone acetyltransferase activity of KAT7/HBO1 in a CDT1-dependent manner, inhibiting histone H4 acetylation and DNA replication licensing. Inhibits the transcriptional activity of a subset of Hox proteins, enrolling them in cell proliferative control. The sequence is that of Geminin (Gmnn) from Mus musculus (Mouse).